A 101-amino-acid chain; its full sequence is Small ribosomal subunit protein bS18c (101 aa).

It belongs to the bacterial ribosomal protein bS18 family. Part of the 30S ribosomal subunit.

Its subcellular location is the plastid. It is found in the chloroplast. The chain is Small ribosomal subunit protein bS18c from Morus indica (Mulberry).